We begin with the raw amino-acid sequence, 216 residues long: Peptide deformylase (216 aa).

C134 and H178 together coordinate Fe cation. The active site involves E179. Residue H182 coordinates Fe cation.

It belongs to the polypeptide deformylase family. It depends on Fe(2+) as a cofactor.

It catalyses the reaction N-terminal N-formyl-L-methionyl-[peptide] + H2O = N-terminal L-methionyl-[peptide] + formate. Functionally, removes the formyl group from the N-terminal Met of newly synthesized proteins. Requires at least a dipeptide for an efficient rate of reaction. N-terminal L-methionine is a prerequisite for activity but the enzyme has broad specificity at other positions. This chain is Peptide deformylase, found in Mycoplasma pneumoniae (strain ATCC 29342 / M129 / Subtype 1) (Mycoplasmoides pneumoniae).